We begin with the raw amino-acid sequence, 303 residues long: tRNA dimethylallyltransferase (303 aa).

10-17 (GPTASGKS) contacts ATP. 12–17 (TASGKS) is a binding site for substrate. The interval 35-38 (DSMQ) is interaction with substrate tRNA.

The protein belongs to the IPP transferase family. As to quaternary structure, monomer. Mg(2+) is required as a cofactor.

The enzyme catalyses adenosine(37) in tRNA + dimethylallyl diphosphate = N(6)-dimethylallyladenosine(37) in tRNA + diphosphate. Catalyzes the transfer of a dimethylallyl group onto the adenine at position 37 in tRNAs that read codons beginning with uridine, leading to the formation of N6-(dimethylallyl)adenosine (i(6)A). The chain is tRNA dimethylallyltransferase from Methylobacterium nodulans (strain LMG 21967 / CNCM I-2342 / ORS 2060).